Here is a 269-residue protein sequence, read N- to C-terminus: MPGVETIKSSWADEVELDYGGLPPTTETVENGHKYVTEYKYNKDDKKTKVVRTYKISKQVVPKTVAKRRTWTKFGESKNDKPGPNSQTTMVSEEIIMQFLNSKEDEKANDPLLDPSKNIAKCRICNGEHWSVNCPYKGTAMDTNLMEKKAAAAASAAVDAPKSGKYVPPFLKDSQKGGMGMRGRDDTAAIRISNLSESMTEADLEELVKKIGPQSKMYLARDKNTGLCKGFAYVHFKQRKDAAAAIEILNGHGYDHLILSVEWSKPQNN.

Residues 188–266 (AAIRISNLSE…LILSVEWSKP (79 aa)) enclose the RRM domain.

This sequence belongs to the eIF-3 subunit G family. In terms of assembly, component of the eukaryotic translation initiation factor 3 (eIF-3) complex. The eIF-3 complex interacts with pix.

Its subcellular location is the cytoplasm. RNA-binding component of the eukaryotic translation initiation factor 3 (eIF-3) complex, which is involved in protein synthesis of a specialized repertoire of mRNAs and, together with other initiation factors, stimulates binding of mRNA and methionyl-tRNAi to the 40S ribosome. The eIF-3 complex specifically targets and initiates translation of a subset of mRNAs involved in cell proliferation. This subunit can bind 18S rRNA. In Drosophila willistoni (Fruit fly), this protein is Eukaryotic translation initiation factor 3 subunit G-1.